We begin with the raw amino-acid sequence, 553 residues long: CTP synthase (553 aa).

An amidoligase domain region spans residues 1–277 (MPTEPETDYD…DQYVMEELDI (277 aa)). Serine 26 is a CTP binding site. Serine 26 lines the UTP pocket. Residues 27–32 (GLGKGI) and aspartate 84 contribute to the ATP site. The Mg(2+) site is built by aspartate 84 and glutamate 152. CTP contacts are provided by residues 159-161 (DIE), 198-203 (KTKPTQ), and lysine 234. Residues 198 to 203 (KTKPTQ) and lysine 234 contribute to the UTP site. A Glutamine amidotransferase type-1 domain is found at 307-544 (LVGKYDLEDA…LEAVLGDDPH (238 aa)). L-glutamine is bound at residue glycine 364. The active-site Nucleophile; for glutamine hydrolysis is the cysteine 391. L-glutamine-binding positions include 392-395 (LGFQ), glutamate 415, and arginine 472. Active-site residues include histidine 517 and glutamate 519.

The protein belongs to the CTP synthase family. In terms of assembly, homotetramer.

It catalyses the reaction UTP + L-glutamine + ATP + H2O = CTP + L-glutamate + ADP + phosphate + 2 H(+). It carries out the reaction L-glutamine + H2O = L-glutamate + NH4(+). The catalysed reaction is UTP + NH4(+) + ATP = CTP + ADP + phosphate + 2 H(+). It participates in pyrimidine metabolism; CTP biosynthesis via de novo pathway; CTP from UDP: step 2/2. Its activity is regulated as follows. Allosterically activated by GTP, when glutamine is the substrate; GTP has no effect on the reaction when ammonia is the substrate. The allosteric effector GTP functions by stabilizing the protein conformation that binds the tetrahedral intermediate(s) formed during glutamine hydrolysis. Inhibited by the product CTP, via allosteric rather than competitive inhibition. Catalyzes the ATP-dependent amination of UTP to CTP with either L-glutamine or ammonia as the source of nitrogen. Regulates intracellular CTP levels through interactions with the four ribonucleotide triphosphates. This chain is CTP synthase, found in Haloarcula marismortui (strain ATCC 43049 / DSM 3752 / JCM 8966 / VKM B-1809) (Halobacterium marismortui).